The chain runs to 247 residues: Adenosylcobinamide-GDP ribazoletransferase (247 aa).

6 helical membrane-spanning segments follow: residues Ile-34 to Ala-54, Cys-59 to Phe-79, Gly-113 to Leu-133, Met-138 to Tyr-158, Val-171 to Ala-193, and Ile-194 to Ile-214.

Belongs to the CobS family. Mg(2+) is required as a cofactor.

It is found in the cell inner membrane. The enzyme catalyses alpha-ribazole + adenosylcob(III)inamide-GDP = adenosylcob(III)alamin + GMP + H(+). The catalysed reaction is alpha-ribazole 5'-phosphate + adenosylcob(III)inamide-GDP = adenosylcob(III)alamin 5'-phosphate + GMP + H(+). It participates in cofactor biosynthesis; adenosylcobalamin biosynthesis; adenosylcobalamin from cob(II)yrinate a,c-diamide: step 7/7. Joins adenosylcobinamide-GDP and alpha-ribazole to generate adenosylcobalamin (Ado-cobalamin). Also synthesizes adenosylcobalamin 5'-phosphate from adenosylcobinamide-GDP and alpha-ribazole 5'-phosphate. This Citrobacter koseri (strain ATCC BAA-895 / CDC 4225-83 / SGSC4696) protein is Adenosylcobinamide-GDP ribazoletransferase.